The chain runs to 369 residues: Flagellar P-ring protein (369 aa).

The N-terminal stretch at 1-22 (MFNVRQLIATTLLLSCAFAAQA) is a signal peptide.

This sequence belongs to the FlgI family. As to quaternary structure, the basal body constitutes a major portion of the flagellar organelle and consists of four rings (L,P,S, and M) mounted on a central rod.

The protein resides in the periplasm. It localises to the bacterial flagellum basal body. Its function is as follows. Assembles around the rod to form the L-ring and probably protects the motor/basal body from shearing forces during rotation. The polypeptide is Flagellar P-ring protein (Pseudomonas putida (strain ATCC 47054 / DSM 6125 / CFBP 8728 / NCIMB 11950 / KT2440)).